The sequence spans 1019 residues: Katanin p80 WD40 repeat-containing subunit B1 homolog KTN80.1 (1019 aa).

7 WD repeats span residues 13-53, 56-95, 98-137, 140-181, 183-221, 224-264, and 266-303; these read AHSG…SPMS, GHTS…MVRA, GHRS…CIQT, GHTR…HEFK, HEGP…LIGT, PEAT…DGVD, and GWST…LEPY. Residues 114–130 carry the DWD box motif; the sequence is FLASGSSDTNLRVWDTR. Disordered regions lie at residues 388-424, 455-474, 517-581, and 607-652; these read FGPA…TKSG, KSGL…LSEQ, IHRS…GSRE, and RGEK…RARS. A compositionally biased stretch (polar residues) spans 465–474; the sequence is QTQNAFLSEQ. Residues 553-572 show a composition bias toward basic and acidic residues; the sequence is IPSKTERVLSREKPGDEQKN. Polar residues predominate over residues 614 to 628; the sequence is TEGASTTIEQNNNAV.

This sequence belongs to the WD repeat KATNB1 family. Component of KTN80-KTN1 complexes composed of a hexamer of KTN1-KTN80 heterodimers that sense microtubule (MT) geometry to confer precise MT severing. Interacts directly with AAA1/KTN1 and KTN80.3, and weakly with KTN80.4. As to expression, expressed at low levels in siliques, flowers, leaves, stems and roots.

It localises to the cytoplasm. The protein resides in the cytoskeleton. Functionally, may participate in a complex which severs microtubules in an ATP-dependent manner. Microtubule severing may promote rapid reorganization of cellular microtubule arrays. Confers precision to microtubule (MT) severing by specific targeting of KTN1 to MT cleavage sites such as crossover or branching nucleation sites. Together with other KTN80s, regulates cell elongation by modulating MT organization. This is Katanin p80 WD40 repeat-containing subunit B1 homolog KTN80.1 from Arabidopsis thaliana (Mouse-ear cress).